The following is a 147-amino-acid chain: Siroheme decarboxylase NirG subunit (147 aa).

Belongs to the Ahb/Nir family. In terms of assembly, probably forms a complex composed of NirD, NirL, NirG and NirH. All proteins are required for the total conversion of siroheme to didecarboxysiroheme.

It catalyses the reaction siroheme + 2 H(+) = 12,18-didecarboxysiroheme + 2 CO2. It participates in porphyrin-containing compound metabolism. Its function is as follows. Involved in heme d1 biosynthesis. Catalyzes the decarboxylation of siroheme into didecarboxysiroheme. The sequence is that of Siroheme decarboxylase NirG subunit from Stutzerimonas stutzeri (Pseudomonas stutzeri).